The sequence spans 329 residues: Delta-aminolevulinic acid dehydratase (329 aa).

The active-site Schiff-base intermediate with substrate is K202. R212 and R223 together coordinate 5-aminolevulinate. E239 serves as a coordination point for Mg(2+). K254 acts as the Schiff-base intermediate with substrate in catalysis. 5-aminolevulinate is bound by residues S280 and Y319.

It belongs to the ALAD family. In terms of assembly, homooctamer.

The enzyme catalyses 2 5-aminolevulinate = porphobilinogen + 2 H2O + H(+). It functions in the pathway porphyrin-containing compound metabolism; protoporphyrin-IX biosynthesis; coproporphyrinogen-III from 5-aminolevulinate: step 1/4. Functionally, catalyzes an early step in the biosynthesis of tetrapyrroles. Binds two molecules of 5-aminolevulinate per subunit, each at a distinct site, and catalyzes their condensation to form porphobilinogen. The polypeptide is Delta-aminolevulinic acid dehydratase (hemB) (Mycobacterium leprae (strain TN)).